The following is a 401-amino-acid chain: MHPHISKLYNSALKPSRLIIGLMSGTSLDGLDVALCKITAAGVHTQIEVLKFTTVDYSDDYKTKIKQVFAKRECNLEYLTLLHPWVGKFHGDMVNQCLNSWQVNPANIDVIASHGQTIYHCPKSQHQYNDFNNGTLQIGDSDQIAVTTGITTIGDFRQKHIAAGGEGAPLAVYGDYLFFSSSDENRILLNMGGIANLTFLPQNGDSNAVFSSDIGPCNTIMDAYVQRYFNNMHYDENAAIAKAGFINTALLTALCDNHFLTLKMPKTTGPEVFNLAYLEAAQQASNTQKLSHQDVMATLNRFTAEVIANALNTCVKMAPNSVVYASGGGIHNLLLMQHLVTLCPAIKGFKNTHALGVDPDAKEAVLFAILANECLAGEQLHLDNKAQGIAGVTMGKVSFAD.

Position 25–32 (25–32 (GTSLDGLD)) interacts with ATP.

This sequence belongs to the anhydro-N-acetylmuramic acid kinase family.

It carries out the reaction 1,6-anhydro-N-acetyl-beta-muramate + ATP + H2O = N-acetyl-D-muramate 6-phosphate + ADP + H(+). It functions in the pathway amino-sugar metabolism; 1,6-anhydro-N-acetylmuramate degradation. Its pathway is cell wall biogenesis; peptidoglycan recycling. Catalyzes the specific phosphorylation of 1,6-anhydro-N-acetylmuramic acid (anhMurNAc) with the simultaneous cleavage of the 1,6-anhydro ring, generating MurNAc-6-P. Is required for the utilization of anhMurNAc either imported from the medium or derived from its own cell wall murein, and thus plays a role in cell wall recycling. This Pseudoalteromonas translucida (strain TAC 125) protein is Anhydro-N-acetylmuramic acid kinase.